The chain runs to 199 residues: Fe/S biogenesis protein NfuA (199 aa).

Residues Cys156 and Cys159 each contribute to the [4Fe-4S] cluster site.

It belongs to the NfuA family. Homodimer. [4Fe-4S] cluster is required as a cofactor.

In terms of biological role, involved in iron-sulfur cluster biogenesis. Binds a 4Fe-4S cluster, can transfer this cluster to apoproteins, and thereby intervenes in the maturation of Fe/S proteins. Could also act as a scaffold/chaperone for damaged Fe/S proteins. The polypeptide is Fe/S biogenesis protein NfuA (Haemophilus ducreyi (strain 35000HP / ATCC 700724)).